Consider the following 135-residue polypeptide: uncharacterized protein (135 aa).

The chain crosses the membrane as a helical span at residues 35 to 55; sequence VVLVLIGATIILVVISVLVVS.

It localises to the membrane. This is an uncharacterized protein from Saccharomyces cerevisiae (strain ATCC 204508 / S288c) (Baker's yeast).